We begin with the raw amino-acid sequence, 274 residues long: tRNA-cytidine(32) 2-sulfurtransferase (274 aa).

The PP-loop motif motif lies at 40 to 45; that stretch reads SGGKDS. Residues cysteine 115, cysteine 118, and cysteine 206 each coordinate [4Fe-4S] cluster.

The protein belongs to the TtcA family. Homodimer. Mg(2+) is required as a cofactor. [4Fe-4S] cluster serves as cofactor.

Its subcellular location is the cytoplasm. The catalysed reaction is cytidine(32) in tRNA + S-sulfanyl-L-cysteinyl-[cysteine desulfurase] + AH2 + ATP = 2-thiocytidine(32) in tRNA + L-cysteinyl-[cysteine desulfurase] + A + AMP + diphosphate + H(+). It participates in tRNA modification. In terms of biological role, catalyzes the ATP-dependent 2-thiolation of cytidine in position 32 of tRNA, to form 2-thiocytidine (s(2)C32). The sulfur atoms are provided by the cysteine/cysteine desulfurase (IscS) system. The polypeptide is tRNA-cytidine(32) 2-sulfurtransferase (Azotobacter vinelandii (strain DJ / ATCC BAA-1303)).